The sequence spans 462 residues: Beta-glucosidase 1A (462 aa).

Substrate-binding residues include Gln-20, His-123, and Asn-169. The active-site Proton donor is Glu-170. Substrate is bound at residue Tyr-301. Residue Glu-365 is the Nucleophile of the active site. Substrate is bound by residues Trp-415 and Glu-422–Trp-423.

It belongs to the glycosyl hydrolase 1 family.

The enzyme catalyses Hydrolysis of terminal, non-reducing beta-D-glucosyl residues with release of beta-D-glucose.. Plays an important role in cellulose degradation. Shows hydrolytic activity against several glycosidic compounds. The sequence is that of Beta-glucosidase 1A from Phanerodontia chrysosporium (White-rot fungus).